The primary structure comprises 148 residues: UPF0758 protein YeeS (148 aa).

The region spanning 26 to 148 is the MPN domain; the sequence is AFTSTRAARE…VFSFAEHGLL (123 aa). Positions 97, 99, and 110 each coordinate Zn(2+). Positions 97–110 match the JAMM motif motif; that stretch reads HNHPSGEVTPSKAD.

The protein belongs to the UPF0758 family.

The chain is UPF0758 protein YeeS (yeeS) from Escherichia coli (strain K12).